A 136-amino-acid chain; its full sequence is Large ribosomal subunit protein uL16 (136 aa).

It belongs to the universal ribosomal protein uL16 family. Part of the 50S ribosomal subunit.

Functionally, binds 23S rRNA and is also seen to make contacts with the A and possibly P site tRNAs. The sequence is that of Large ribosomal subunit protein uL16 from Wigglesworthia glossinidia brevipalpis.